Reading from the N-terminus, the 151-residue chain is U-scoloptoxin(17)-Er2a (151 aa).

The N-terminal stretch at 1–22 (MKSFFVVFAIVFQATLVALSLA) is a signal peptide.

This sequence belongs to the scoloptoxin-17 family. In terms of processing, contains 5 disulfide bonds. In terms of tissue distribution, expressed by the venom gland.

It localises to the secreted. This chain is U-scoloptoxin(17)-Er2a, found in Ethmostigmus rubripes (Giant centipede).